A 257-amino-acid chain; its full sequence is tRNA uridine(34) hydroxylase (257 aa).

In terms of domain architecture, Rhodanese spans 128 to 222 (NGRRLVMLDA…YFEQVGGEGY (95 aa)). Cysteine 182 serves as the catalytic Cysteine persulfide intermediate.

This sequence belongs to the TrhO family.

It catalyses the reaction uridine(34) in tRNA + AH2 + O2 = 5-hydroxyuridine(34) in tRNA + A + H2O. Its function is as follows. Catalyzes oxygen-dependent 5-hydroxyuridine (ho5U) modification at position 34 in tRNAs. The chain is tRNA uridine(34) hydroxylase from Xylella fastidiosa (strain M23).